Consider the following 144-residue polypeptide: Probable calcium-binding protein CML31 (144 aa).

4 EF-hand domains span residues 1–31 (MAEIFESVDKNKDGKILWDEFAEAIRVFSPQ), 32–67 (ITSEEIDKMFIVLDVDGDGQIDDVEFASCLMVNGGG), 72–107 (EEEVVMKEAFDLYDMDGDGKISASEIHVVLKRLGEK), and 108–143 (HTMEDCVVMVQTVDKDSDGFVNFEEFKIMMNSNKES). Asp45, Asp47, Asp49, Gln51, Glu56, Asp85, Asp87, Asp89, Lys91, Glu96, Asp121, Asp123, Asp125, and Glu132 together coordinate Ca(2+).

Its function is as follows. Potential calcium sensor. The sequence is that of Probable calcium-binding protein CML31 (CML31) from Arabidopsis thaliana (Mouse-ear cress).